Reading from the N-terminus, the 783-residue chain is Centrosomal protein of 89 kDa (783 aa).

The interval Pro28–Arg49 is disordered. The segment covering Arg34–Pro45 has biased composition (pro residues). Ser50 carries the post-translational modification Phosphoserine. Disordered stretches follow at residues Gly63 to Tyr157 and Asp176 to Gly226. The segment covering Ala94 to Ser107 has biased composition (polar residues). Basic and acidic residues-rich tracts occupy residues Glu139–Asp155 and Gln196–Leu214. 2 coiled-coil regions span residues Glu234 to Gln333 and Leu369 to Glu719.

The protein localises to the cytoplasm. It localises to the cytosol. The protein resides in the cytoskeleton. Its subcellular location is the microtubule organizing center. It is found in the centrosome. The protein localises to the spindle pole. It localises to the centriole. The protein resides in the mitochondrion intermembrane space. Required for ciliogenesis. Also plays a role in mitochondrial metabolism where it may modulate complex IV activity. The chain is Centrosomal protein of 89 kDa (CEP89) from Homo sapiens (Human).